The sequence spans 328 residues: Nuclear transcription factor Y subunit A-8 (328 aa).

The tract at residues 54–86 (KNISFQDQDSSSTLSSAQSSNDVTSSGDDNPSR) is disordered. Low complexity predominate over residues 57–75 (SFQDQDSSSTLSSAQSSND). Residues 76-86 (VTSSGDDNPSR) are compositionally biased toward polar residues. Residues 175–198 (FVNAKQFHAIMRRRQQRAKLEAQN) carry the Subunit association domain (SAD) motif. The NFYA/HAP2-type DNA-binding region spans 205 to 230 (KPYLHESRHVHALKRPRGSGGRFLNT).

It belongs to the NFYA/HAP2 subunit family. Heterotrimeric transcription factor composed of three components, NF-YA, NF-YB and NF-YC. NF-YB and NF-YC must interact and dimerize for NF-YA association and DNA binding. As to expression, expressed in the whole plant, except roots.

It localises to the nucleus. Functionally, stimulates the transcription of various genes by recognizing and binding to a CCAAT motif in promoters. This is Nuclear transcription factor Y subunit A-8 (NFYA8) from Arabidopsis thaliana (Mouse-ear cress).